The following is a 214-amino-acid chain: Cytochrome c biogenesis ATP-binding export protein CcmA (214 aa).

One can recognise an ABC transporter domain in the interval 4–214; it reads LAVDQLTVSR…FDHGFDGAFL (211 aa). 36-43 lines the ATP pocket; it reads GPNGIGKT.

This sequence belongs to the ABC transporter superfamily. CcmA exporter (TC 3.A.1.107) family. As to quaternary structure, the complex is composed of two ATP-binding proteins (CcmA) and two transmembrane proteins (CcmB).

It is found in the cell inner membrane. It catalyses the reaction heme b(in) + ATP + H2O = heme b(out) + ADP + phosphate + H(+). Functionally, part of the ABC transporter complex CcmAB involved in the biogenesis of c-type cytochromes; once thought to export heme, this seems not to be the case, but its exact role is uncertain. Responsible for energy coupling to the transport system. The polypeptide is Cytochrome c biogenesis ATP-binding export protein CcmA (Rhodobacter capsulatus (strain ATCC BAA-309 / NBRC 16581 / SB1003)).